The following is a 604-amino-acid chain: uncharacterized protein (604 aa).

An N-terminal signal peptide occupies residues 1-40 (MWLQQRIKVFPGLLSSSWARRVLAVSGFLVIIYWYIFSGS). At 41-563 (HYRSFWYSGK…EEHMAKQYRG (523 aa)) the chain is on the extracellular side. Asn-337 is a glycosylation site (N-linked (GlcNAc...) asparagine). Residues 564-584 (LPFLFWFSVASLITLFHLFLF) traverse the membrane as a helical segment. The Cytoplasmic portion of the chain corresponds to 585-604 (KLIYNEYCGPGAKPLFRSKV).

Its subcellular location is the membrane. This is an uncharacterized protein from Xenopus laevis (African clawed frog).